The sequence spans 137 residues: Transcription antitermination protein NusB (137 aa).

Belongs to the NusB family.

Functionally, involved in transcription antitermination. Required for transcription of ribosomal RNA (rRNA) genes. Binds specifically to the boxA antiterminator sequence of the ribosomal RNA (rrn) operons. The protein is Transcription antitermination protein NusB of Finegoldia magna (strain ATCC 29328 / DSM 20472 / WAL 2508) (Peptostreptococcus magnus).